We begin with the raw amino-acid sequence, 957 residues long: Glycine dehydrogenase (decarboxylating) (957 aa).

Lys708 bears the N6-(pyridoxal phosphate)lysine mark.

It belongs to the GcvP family. The glycine cleavage system is composed of four proteins: P, T, L and H. Pyridoxal 5'-phosphate serves as cofactor.

The enzyme catalyses N(6)-[(R)-lipoyl]-L-lysyl-[glycine-cleavage complex H protein] + glycine + H(+) = N(6)-[(R)-S(8)-aminomethyldihydrolipoyl]-L-lysyl-[glycine-cleavage complex H protein] + CO2. Its function is as follows. The glycine cleavage system catalyzes the degradation of glycine. The P protein binds the alpha-amino group of glycine through its pyridoxal phosphate cofactor; CO(2) is released and the remaining methylamine moiety is then transferred to the lipoamide cofactor of the H protein. The chain is Glycine dehydrogenase (decarboxylating) from Shigella dysenteriae serotype 1 (strain Sd197).